A 291-amino-acid polypeptide reads, in one-letter code: MEMO1 family protein TK1477 (291 aa).

This sequence belongs to the MEMO1 family.

In Thermococcus kodakarensis (strain ATCC BAA-918 / JCM 12380 / KOD1) (Pyrococcus kodakaraensis (strain KOD1)), this protein is MEMO1 family protein TK1477.